Here is a 217-residue protein sequence, read N- to C-terminus: Carboxylesterase Culp1 (217 aa).

Positions Met-1 to Ala-32 are cleaved as a signal peptide. Cysteines 35 and 107 form a disulfide. The Nucleophile role is filled by Ser-118. Cys-177 and Cys-184 form a disulfide bridge. Asp-181 is a catalytic residue. Catalysis depends on His-193, which acts as the Proton donor/acceptor.

Belongs to the cutinase family.

The protein localises to the secreted. It catalyses the reaction a fatty acid ester + H2O = an aliphatic alcohol + a fatty acid + H(+). Its function is as follows. Shows esterase activity, with a preference for short- and medium-chain fatty acids. This is Carboxylesterase Culp1 from Mycobacterium bovis (strain ATCC BAA-935 / AF2122/97).